A 147-amino-acid polypeptide reads, in one-letter code: 3-dehydroquinate dehydratase (147 aa).

Residue Y25 is the Proton acceptor of the active site. Substrate contacts are provided by N76, H82, and D89. The active-site Proton donor is the H102. Residues 103-104 and R113 contribute to the substrate site; that span reads IS.

It belongs to the type-II 3-dehydroquinase family. As to quaternary structure, homododecamer.

It catalyses the reaction 3-dehydroquinate = 3-dehydroshikimate + H2O. The protein operates within metabolic intermediate biosynthesis; chorismate biosynthesis; chorismate from D-erythrose 4-phosphate and phosphoenolpyruvate: step 3/7. Its function is as follows. Catalyzes a trans-dehydration via an enolate intermediate. This is 3-dehydroquinate dehydratase from Mycobacterium tuberculosis (strain ATCC 25177 / H37Ra).